We begin with the raw amino-acid sequence, 899 residues long: Probable dipeptidyl-aminopeptidase B (899 aa).

Disordered regions lie at residues 1-37 (MARK…SDGS) and 51-84 (KITR…TENS). The Cytoplasmic portion of the chain corresponds to 1–91 (MARKDKDNGP…ENSKRNRGSR (91 aa)). The span at 22–37 (SSASFSSTDSLSSDGS) shows a compositional bias: low complexity. The segment covering 61 to 74 (NPYRDDDVELERGD) has biased composition (basic and acidic residues). A helical; Signal-anchor for type II membrane protein transmembrane segment spans residues 92 to 112 (LIWVVGLLCLGGWILAFVLFW). At 113–899 (GRRNSELSSS…QQGNSVLPVT (787 aa)) the chain is on the vacuolar side. Residues Asn149, Asn194, Asn347, Asn409, Asn513, Asn638, and Asn643 are each glycosylated (N-linked (GlcNAc...) asparagine). The active-site Charge relay system is the Ser752. An N-linked (GlcNAc...) asparagine glycan is attached at Asn811. Residues Asp829 and His862 each act as charge relay system in the active site.

It belongs to the peptidase S9B family.

The protein localises to the vacuole membrane. The enzyme catalyses Release of an N-terminal dipeptide, Xaa-Yaa-|-Zaa-, from a polypeptide, preferentially when Yaa is Pro, provided Zaa is neither Pro nor hydroxyproline.. Its function is as follows. Type IV dipeptidyl-peptidase which removes N-terminal dipeptides sequentially from polypeptides having unsubstituted N-termini provided that the penultimate residue is proline. This is Probable dipeptidyl-aminopeptidase B (dapB) from Talaromyces marneffei (strain ATCC 18224 / CBS 334.59 / QM 7333) (Penicillium marneffei).